The sequence spans 154 residues: 17 kDa A-type inclusion protein (154 aa).

A coiled-coil region spans residues 17 to 85; that stretch reads QKDCSDKLDR…YKRELERDRY (69 aa). The tract at residues 88 to 154 is disordered; that stretch reads SRYLTSSSDP…DVEPEHPPAF (67 aa).

This is 17 kDa A-type inclusion protein from Bos taurus (Bovine).